The chain runs to 260 residues: Ribonuclease PH (260 aa).

Phosphate-binding positions include R88 and 126 to 128 (GTR).

Belongs to the RNase PH family. As to quaternary structure, homohexameric ring arranged as a trimer of dimers.

It carries out the reaction tRNA(n+1) + phosphate = tRNA(n) + a ribonucleoside 5'-diphosphate. Functionally, phosphorolytic 3'-5' exoribonuclease that plays an important role in tRNA 3'-end maturation. Removes nucleotide residues following the 3'-CCA terminus of tRNAs; can also add nucleotides to the ends of RNA molecules by using nucleoside diphosphates as substrates, but this may not be physiologically important. Probably plays a role in initiation of 16S rRNA degradation (leading to ribosome degradation) during starvation. This chain is Ribonuclease PH, found in Mycolicibacterium gilvum (strain PYR-GCK) (Mycobacterium gilvum (strain PYR-GCK)).